A 231-amino-acid chain; its full sequence is ATP phosphoribosyltransferase (231 aa).

Belongs to the ATP phosphoribosyltransferase family. Short subfamily. In terms of assembly, heteromultimer composed of HisG and HisZ subunits.

It is found in the cytoplasm. The catalysed reaction is 1-(5-phospho-beta-D-ribosyl)-ATP + diphosphate = 5-phospho-alpha-D-ribose 1-diphosphate + ATP. It participates in amino-acid biosynthesis; L-histidine biosynthesis; L-histidine from 5-phospho-alpha-D-ribose 1-diphosphate: step 1/9. Catalyzes the condensation of ATP and 5-phosphoribose 1-diphosphate to form N'-(5'-phosphoribosyl)-ATP (PR-ATP). Has a crucial role in the pathway because the rate of histidine biosynthesis seems to be controlled primarily by regulation of HisG enzymatic activity. This chain is ATP phosphoribosyltransferase, found in Brucella ovis (strain ATCC 25840 / 63/290 / NCTC 10512).